A 100-amino-acid polypeptide reads, in one-letter code: uncharacterized protein (100 aa).

This is an uncharacterized protein from Homo sapiens (Human).